The sequence spans 507 residues: Fatty acid resistance protein FarB (507 aa).

14 helical membrane passes run 8-28 (GAAL…EVLD), 52-72 (WVIT…GFLA), 78-98 (VKLF…CGIA), 109-129 (ILQG…LMAS), 136-156 (MLAL…GPIL), 164-184 (WHWG…AWIT), 199-219 (PTDY…QMML), 233-253 (IITL…WELG), 274-294 (IATS…PLVL), 303-323 (AWAG…SPLI), 334-354 (LLVT…TDFY), 363-383 (IWPQ…LTTI), 399-419 (LSNF…STLW), and 478-498 (IFLA…LAKP).

It belongs to the major facilitator superfamily. EmrB family. Probably part of a tripartite efflux system FarAB-MtrE, which is composed of an inner membrane transporter, FarB, a periplasmic membrane fusion protein, FarA, and an outer membrane component, MtrE.

It localises to the cell inner membrane. In terms of biological role, mediates resistance to long-chained antibacterial fatty acids (FAs). Function is dependent on the MtrE outer membrane protein. This chain is Fatty acid resistance protein FarB, found in Neisseria gonorrhoeae.